The chain runs to 134 residues: DNA-directed RNA polymerase subunit omega (134 aa).

It belongs to the RNA polymerase subunit omega family. As to quaternary structure, the RNAP catalytic core consists of 2 alpha, 1 beta, 1 beta' and 1 omega subunit. When a sigma factor is associated with the core the holoenzyme is formed, which can initiate transcription.

The catalysed reaction is RNA(n) + a ribonucleoside 5'-triphosphate = RNA(n+1) + diphosphate. Promotes RNA polymerase assembly. Latches the N- and C-terminal regions of the beta' subunit thereby facilitating its interaction with the beta and alpha subunits. This is DNA-directed RNA polymerase subunit omega from Rhizobium etli (strain CIAT 652).